Here is a 340-residue protein sequence, read N- to C-terminus: tRNA (cytosine(34)-C(5))-methyltransferase, mitochondrial (340 aa).

S-adenosyl-L-methionine contacts are provided by residues 139-145, Glu-162, Asp-193, and Asp-211; that span reads CAAPGGK. Cys-265 serves as the catalytic Nucleophile.

The protein belongs to the class I-like SAM-binding methyltransferase superfamily. RsmB/NOP family.

The protein localises to the mitochondrion matrix. It carries out the reaction cytidine(34) in mitochondrial tRNA + S-adenosyl-L-methionine = 5-methylcytidine(34) in mitochondrial tRNA + S-adenosyl-L-homocysteine + H(+). Functionally, mitochondrial tRNA methyltransferase that mediates methylation of cytosine to 5-methylcytosine (m5C) at position 34 of mt-tRNA(Met). mt-tRNA(Met) methylation at cytosine(34) takes place at the wobble position of the anticodon and initiates the formation of 5-formylcytosine (f(5)c) at this position. mt-tRNA(Met) containing the f(5)c modification at the wobble position enables recognition of the AUA codon in addition to the AUG codon, expanding codon recognition in mitochondrial translation. The protein is tRNA (cytosine(34)-C(5))-methyltransferase, mitochondrial of Homo sapiens (Human).